The chain runs to 994 residues: Chloride channel protein 1 (994 aa).

Topologically, residues 1-118 (MERSQSQQHG…VLRRKLGEDW (118 aa)) are cytoplasmic. The disordered stretch occupies residues 37-61 (SENGGLQHRPRKDLGPRHNAHPTQI). Residues 119 to 150 (IFLVLLGLLMALVSWCMDYVSAKSLQAYKWTY) traverse the membrane as a helical segment. The Extracellular segment spans residues 151-158 (AQMQPSLP). A helical membrane pass occupies residues 159–179 (LQYLAWVTFPLILILFSALFC). Over 180–183 (QLIS) the chain is Cytoplasmic. The segment at residues 184 to 189 (PQAVGS) is an intramembrane region (note=Loop between two helices). Residues 188 to 192 (GSGIP) carry the Selectivity filter part_1 motif. Residue S189 coordinates chloride. Positions 190-195 (GIPEMK) form an intramembrane region, helical. Topologically, residues 196-208 (TILRGVVLKEYLT) are cytoplasmic. Positions 209–224 (LKAFVAKVVALTAGLG) form an intramembrane region, helical. The segment at residues 225–230 (SGIPVG) is an intramembrane region (note=Loop between two helices). The Selectivity filter part_2 motif lies at 230–234 (GKEGP). The segment at residues 231 to 246 (KEGPFVHIASICAAVL) is an intramembrane region (helical). Residues 247–268 (SKFMSMFSGVYEQPYYYTDILT) are Cytoplasmic-facing. 2 intramembrane regions (helical) span residues 269-280 (VGCAVGVGCCFG) and 281-290 (TPLGGVLFSI). Residues 291-301 (EVTSTYFAVRN) are Cytoplasmic-facing. Residues 302–321 (YWRGFFAATFSAFVFRVLAV) traverse the membrane as a helical segment. At 322 to 347 (WNKDAVTITALFRTNFRMDFPFDLKE) the chain is on the extracellular side. Residues 348–376 (LPAFAVIGICCGFLGAVFVYLHRQVMLGV) traverse the membrane as a helical segment. Over 377 to 390 (RKHKALSQFLAKHR) the chain is Cytoplasmic. Residues 391-408 (LLYPGIVTFVIASLTFPP) traverse the membrane as a helical segment. The Extracellular segment spans residues 409–414 (GMGQFM). An intramembrane region (note=Loop between two helices) is located at residues 415-418 (AGEL). Residues 419–426 (MPREAIST) constitute an intramembrane region (helical). Topologically, residues 427–457 (LFDNNTWVKHIGDPKSLGQSAVWIHPQVNVV) are extracellular. The segment at residues 458-475 (IIILLFFVMKFWMSIVAT) is an intramembrane region (helical). An intramembrane region (note=Loop between two helices) is located at residues 476–482 (TMPIPCG). Residues 482-486 (GGFMP) carry the Selectivity filter part_3 motif. The segment at residues 483–498 (GFMPVFVLGAAFGRLV) is an intramembrane region (helical). F484 contacts chloride. The Extracellular segment spans residues 499 to 521 (GEIMAMLFPEGILFDDIIYKILP). The helical intramembrane region spans 522–538 (GGYAVIGAAALTGAVSH). The segment at residues 539-540 (TV) is an intramembrane region (note=Loop between two helices). The segment at residues 541–554 (STAVICFELTGQIA) is an intramembrane region (helical). Residues 555-557 (HIL) are Extracellular-facing. The helical intramembrane region spans 558–571 (PMMVAVILANMVAQ). Residues 572 to 575 (SLQP) constitute an intramembrane region (note=Loop between two helices). An intramembrane region (helical) is located at residues 576–578 (SLY). Y578 is a binding site for chloride. The Cytoplasmic portion of the chain corresponds to 579-994 (DSIIQVKKLP…DEEDEDELIL (416 aa)). The CBS 1 domain occupies 609-668 (MVRDVKFVSASCTYGELRNLLQTTTVKTLPLVDSKDSMILLGSVERSELQSLLQRHLCAE). Disordered stretches follow at residues 710-769 (EDED…SADQ), 880-923 (TKSG…DGAP), and 965-994 (NLGPEEDLADILHGPSLRSTDEEDEDELIL). Pro residues predominate over residues 725 to 741 (TPTPPPPPPPPLPPQFP). Residues 827-882 (IDQSPFQLVEQTTLHKTHTLFSLLGLHLAYVTSMGKLRGVLALEELQKAIKGHTKS) form the CBS 2 domain. Position 892 is a phosphoserine (S892). Positions 985–994 (DEEDEDELIL) are enriched in acidic residues.

It belongs to the chloride channel (TC 2.A.49) family. ClC-1/CLCN1 subfamily. In terms of assembly, homodimer. In terms of tissue distribution, predominantly expressed in skeletal muscles.

It is found in the cell membrane. The protein resides in the sarcolemma. The protein localises to the T-tubule. The enzyme catalyses chloride(in) = chloride(out). It catalyses the reaction bromide(in) = bromide(out). The catalysed reaction is iodide(out) = iodide(in). It carries out the reaction thiocyanate(in) = thiocyanate(out). The enzyme catalyses nitrate(in) = nitrate(out). Its activity is regulated as follows. Modulated by membrane voltage with depolarization favouring channel opening and hyperpolarization favouring channel closure. Inhibited by acidic pH and ATP binding due to a shift of voltage dependence of common gating to more positive voltages. Inhibited by 9-anthracene-carboxylic acid. Voltage-gated chloride channel involved in skeletal muscle excitability. Generates most of the plasma membrane chloride conductance in skeletal muscle fibers, stabilizes the resting membrane potential and contributes to the repolarization phase during action potential firing. Forms a homodimeric channel where each subunit has its own ion conduction pathway. Conducts double-barreled currents controlled by two types of gates, two fast glutamate gates that control each subunit independently and a slow common gate that opens and shuts off both subunits simultaneously. Has a significant open probability at muscle resting potential and is further activated upon membrane depolarization. Permeable to small monovalent anions with ion selectivity for chloride &gt; thiocyanate &gt; bromide &gt; nitrate &gt; iodide. This chain is Chloride channel protein 1 (Clcn1), found in Rattus norvegicus (Rat).